The primary structure comprises 72 residues: Palustrin-2CG1 (72 aa).

The N-terminal stretch at methionine 1–cysteine 22 is a signal peptide. Positions glutamine 23–valine 39 are cleaved as a propeptide — removed in mature form. Cysteine 64 and cysteine 70 are oxidised to a cystine.

As to expression, expressed by the skin glands.

Its subcellular location is the secreted. Antimicrobial peptide active against a variety of Gram-positive and some Gram-negative bacterial strains. Has antifungal activity against a slime mold isolate. Has hemolytic activity against human erythrocytes. The protein is Palustrin-2CG1 of Amolops chunganensis (Chungan torrent frog).